Here is a 1169-residue protein sequence, read N- to C-terminus: Chromosome partition protein Smc (1169 aa).

32-39 (PNGCGKSN) lines the ATP pocket. Coiled-coil stretches lie at residues 170–265 (ISKY…TGEE) and 307–481 (IRHT…ERLN). Residues 525–620 (DRLGEKIEVA…CASDPAEAAE (96 aa)) enclose the SMC hinge domain. 2 coiled-coil regions span residues 656–914 (ALAR…MKLA) and 985–1014 (RYLE…ECRA).

Belongs to the SMC family. Homodimer.

The protein resides in the cytoplasm. Required for chromosome condensation and partitioning. This is Chromosome partition protein Smc from Methylococcus capsulatus (strain ATCC 33009 / NCIMB 11132 / Bath).